Here is a 341-residue protein sequence, read N- to C-terminus: MALKIKIPETSQSSDEYSRWTVYHIEVAFPNGGKHVVFRRFNEFVALDAQIRPNDYNSRLCKLPSKSWVSSTVTNEKLRESRRLALQAYVQCLSETPWIKMPVVKKFLNIKDESEDETQGQFLGPTDWIQVFQDCKRNLHMYRVDLMSGKSITIGVQTKNVYAIKSLMDNLSESLDKLELANALGPGEILRRKDMLEQLGSEFLSFKRLVKNANSPVAPPSASSQLNSSNPSSPFRPLSASTDKQSNTSLNRVLGKNRMPETQTTKKLDNVGLYNMQNQTMEDQDMQAESLLPIIQRQKELSKMINQEVVEQNSMLDELSNEAYANQKKLHRTRAGLRKLG.

Residues 1 to 115 (MALKIKIPET…KFLNIKDESE (115 aa)) enclose the PX domain. Residues 214-233 (NSPVAPPSASSQLNSSNPSS) are compositionally biased toward low complexity. Residues 214–265 (NSPVAPPSASSQLNSSNPSSPFRPLSASTDKQSNTSLNRVLGKNRMPETQTT) are disordered. The span at 239–251 (SASTDKQSNTSLN) shows a compositional bias: polar residues. In terms of domain architecture, t-SNARE coiled-coil homology spans 278–340 (NQTMEDQDMQ…HRTRAGLRKL (63 aa)).

As to quaternary structure, possibly multimeric.

It is found in the vacuole. Functionally, essential for proper morphogenesis of the vacuole. May exist as structural reinforcement on the surface of the vacuolar membrane and be required for maintenance against rupture by osmotic pressure. This is Vacuolar morphogenesis protein 7 homolog from Schizosaccharomyces pombe (strain 972 / ATCC 24843) (Fission yeast).